Reading from the N-terminus, the 322-residue chain is Pantothenate kinase (322 aa).

Residue 100-107 coordinates ATP; the sequence is GSVAVGKS.

It belongs to the prokaryotic pantothenate kinase family.

The protein localises to the cytoplasm. The enzyme catalyses (R)-pantothenate + ATP = (R)-4'-phosphopantothenate + ADP + H(+). It participates in cofactor biosynthesis; coenzyme A biosynthesis; CoA from (R)-pantothenate: step 1/5. This Agrobacterium fabrum (strain C58 / ATCC 33970) (Agrobacterium tumefaciens (strain C58)) protein is Pantothenate kinase.